Reading from the N-terminus, the 174-residue chain is Crossover junction endodeoxyribonuclease RuvC (174 aa).

Catalysis depends on residues Asp-8, Glu-68, and Asp-140. Positions 8, 68, and 140 each coordinate Mg(2+).

It belongs to the RuvC family. Homodimer which binds Holliday junction (HJ) DNA. The HJ becomes 2-fold symmetrical on binding to RuvC with unstacked arms; it has a different conformation from HJ DNA in complex with RuvA. In the full resolvosome a probable DNA-RuvA(4)-RuvB(12)-RuvC(2) complex forms which resolves the HJ. The cofactor is Mg(2+).

The protein localises to the cytoplasm. It carries out the reaction Endonucleolytic cleavage at a junction such as a reciprocal single-stranded crossover between two homologous DNA duplexes (Holliday junction).. The RuvA-RuvB-RuvC complex processes Holliday junction (HJ) DNA during genetic recombination and DNA repair. Endonuclease that resolves HJ intermediates. Cleaves cruciform DNA by making single-stranded nicks across the HJ at symmetrical positions within the homologous arms, yielding a 5'-phosphate and a 3'-hydroxyl group; requires a central core of homology in the junction. The consensus cleavage sequence is 5'-(A/T)TT(C/G)-3'. Cleavage occurs on the 3'-side of the TT dinucleotide at the point of strand exchange. HJ branch migration catalyzed by RuvA-RuvB allows RuvC to scan DNA until it finds its consensus sequence, where it cleaves and resolves the cruciform DNA. This Legionella pneumophila (strain Lens) protein is Crossover junction endodeoxyribonuclease RuvC.